Consider the following 807-residue polypeptide: Carbamoyltransferase HypF2 (807 aa).

The region spanning 14 to 101 is the Acylphosphatase-like domain; the sequence is RIRIRVRGVV…VDADGFAILE (88 aa). C4-type zinc fingers lie at residues 120-145 and 170-195; these read CPDC…CTQC and CRPC…CPDC. Residues 212–415 form the YrdC-like domain; sequence VDPIAETVAR…HVQFIRRARG (204 aa). The disordered stretch occupies residues 663 to 682; it reads WGEQPSPGRPKTVAHSLGGV.

This sequence belongs to the carbamoyltransferase HypF family.

The catalysed reaction is C-terminal L-cysteinyl-[HypE protein] + carbamoyl phosphate + ATP + H2O = C-terminal S-carboxamide-L-cysteinyl-[HypE protein] + AMP + phosphate + diphosphate + H(+). The protein operates within protein modification; [NiFe] hydrogenase maturation. Involved in the maturation of [NiFe] hydrogenases. Along with HypE, it catalyzes the synthesis of the CN ligands of the active site iron of [NiFe]-hydrogenases. HypF functions as a carbamoyl transferase using carbamoylphosphate as a substrate and transferring the carboxamido moiety in an ATP-dependent reaction to the thiolate of the C-terminal cysteine of HypE yielding a protein-S-carboxamide. The protein is Carbamoyltransferase HypF2 (hypF2) of Cupriavidus necator (strain ATCC 17699 / DSM 428 / KCTC 22496 / NCIMB 10442 / H16 / Stanier 337) (Ralstonia eutropha).